Reading from the N-terminus, the 1068-residue chain is Carbamoyl phosphate synthase large chain (1068 aa).

The segment at 1 to 401 (MPRRTDLHRI…SLLKAVRSLE (401 aa)) is carboxyphosphate synthetic domain. The ATP site is built by arginine 129, arginine 169, glycine 175, glycine 176, glutamine 208, isoleucine 210, glutamate 215, glycine 241, valine 242, histidine 243, glutamine 284, and glutamate 298. One can recognise an ATP-grasp 1 domain in the interval 133-327 (KQLMDELGQP…IAKIAAKIAV (195 aa)). Residues glutamine 284, glutamate 298, and asparagine 300 each contribute to the Mg(2+) site. Mn(2+) is bound by residues glutamine 284, glutamate 298, and asparagine 300. The oligomerization domain stretch occupies residues 402–546 (IGVDHLALRE…YSTYEMENES (145 aa)). The carbamoyl phosphate synthetic domain stretch occupies residues 547–935 (KKSQRPSVLV…ALYKVFEAAN (389 aa)). One can recognise an ATP-grasp 2 domain in the interval 671-867 (ESLLAELGIP…MAEVATRIIL (197 aa)). Positions 707, 746, 748, 752, 777, 778, 779, 780, 820, and 838 each coordinate ATP. Mg(2+)-binding residues include glutamine 820, glutamate 838, and asparagine 840. Positions 820, 838, and 840 each coordinate Mn(2+). The MGS-like domain occupies 936–1068 (LHVPEYGKIL…ESRVFSTESI (133 aa)). The allosteric domain stretch occupies residues 936 to 1068 (LHVPEYGKIL…ESRVFSTESI (133 aa)).

Belongs to the CarB family. Composed of two chains; the small (or glutamine) chain promotes the hydrolysis of glutamine to ammonia, which is used by the large (or ammonia) chain to synthesize carbamoyl phosphate. Tetramer of heterodimers (alpha,beta)4. Mg(2+) is required as a cofactor. The cofactor is Mn(2+).

The catalysed reaction is hydrogencarbonate + L-glutamine + 2 ATP + H2O = carbamoyl phosphate + L-glutamate + 2 ADP + phosphate + 2 H(+). It carries out the reaction hydrogencarbonate + NH4(+) + 2 ATP = carbamoyl phosphate + 2 ADP + phosphate + 2 H(+). Its pathway is amino-acid biosynthesis; L-arginine biosynthesis; carbamoyl phosphate from bicarbonate: step 1/1. It participates in pyrimidine metabolism; UMP biosynthesis via de novo pathway; (S)-dihydroorotate from bicarbonate: step 1/3. Functionally, large subunit of the glutamine-dependent carbamoyl phosphate synthetase (CPSase). CPSase catalyzes the formation of carbamoyl phosphate from the ammonia moiety of glutamine, carbonate, and phosphate donated by ATP, constituting the first step of 2 biosynthetic pathways, one leading to arginine and/or urea and the other to pyrimidine nucleotides. The large subunit (synthetase) binds the substrates ammonia (free or transferred from glutamine from the small subunit), hydrogencarbonate and ATP and carries out an ATP-coupled ligase reaction, activating hydrogencarbonate by forming carboxy phosphate which reacts with ammonia to form carbamoyl phosphate. In Cutibacterium acnes (strain DSM 16379 / KPA171202) (Propionibacterium acnes), this protein is Carbamoyl phosphate synthase large chain.